The following is a 393-amino-acid chain: MAPSGPTGAQPSPAEPLSRSIFRKFLLMLCSLLTSLYVFYCLAERCPPGSGPVAGVPGRGVPAGPRELAMWPAGAPRKRLLQLRQRRRRGRSGPGDSSDQEEQSPGLAAAPGGSGAGSSVAEAQPGTLALLLDEGSKQLPQAIIIGVKKGGTRALLEFLRVHPDVRAVGAEPHFFDRSYHKGLAWYRDLMPRTLEGQITMEKTPSYFVTREAPARISAMSKDTKLIVVVRDPVTRAISDYTQTLSKRPDIPSFESLTFRNRSAGLIDTSWSAIQIGLYAKHLEPWLRHFPLGQMLFVSGERLVSDPAGELRRVQDFLGLKRIITDKHFYFNQTKGFPCLKKAEGSGKPHCLGKTKGRAHPTIAREVLRQLRDFYRPFNRKFYQMTGRDFGWDG.

Topologically, residues 1–24 are cytoplasmic; that stretch reads MAPSGPTGAQPSPAEPLSRSIFRK. The helical; Signal-anchor for type II membrane protein transmembrane segment at 25–43 threads the bilayer; that stretch reads FLLMLCSLLTSLYVFYCLA. At 44 to 393 the chain is on the lumenal side; sequence ERCPPGSGPV…MTGRDFGWDG (350 aa). The disordered stretch occupies residues 85-121; the sequence is QRRRRGRSGPGDSSDQEEQSPGLAAAPGGSGAGSSVA. 149–153 is a 3'-phosphoadenylyl sulfate binding site; it reads KGGTR. Residues 171–177 and 202–205 each bind substrate; these read EPHFFDR and KTPS. Residues R230 and S238 each contribute to the 3'-phosphoadenylyl sulfate site. N-linked (GlcNAc...) asparagine glycosylation is present at N260. 270–271 lines the substrate pocket; it reads WS. A glycan (N-linked (GlcNAc...) asparagine) is linked at N331. A disulfide bridge links C338 with C350. 355–359 provides a ligand contact to 3'-phosphoadenylyl sulfate; that stretch reads KGRAH.

Belongs to the sulfotransferase 1 family.

It is found in the golgi apparatus membrane. It catalyses the reaction alpha-D-glucosaminyl-[heparan sulfate](n) + 3'-phosphoadenylyl sulfate = 3-sulfo-alpha-D-glucosaminyl-[heparan sulfate](n) + adenosine 3',5'-bisphosphate + H(+). In terms of biological role, sulfotransferase that utilizes 3'-phospho-5'-adenylyl sulfate (PAPS) to catalyze the transfer of a sulfo group to an N-unsubstituted glucosamine linked to a 2-O-sulfo iduronic acid unit on heparan sulfate. Catalyzes the O-sulfation of glucosamine in IdoUA2S-GlcNS and also in IdoUA2S-GlcNH2. Unlike HS3ST1/3-OST-1, does not convert non-anticoagulant heparan sulfate to anticoagulant heparan sulfate. The polypeptide is Heparan sulfate glucosamine 3-O-sulfotransferase 3A1 (Hs3st3a1) (Mus musculus (Mouse)).